Consider the following 129-residue polypeptide: Phosphoribosyl-AMP cyclohydrolase (129 aa).

Aspartate 76 is a binding site for Mg(2+). Cysteine 77 is a binding site for Zn(2+). Mg(2+) contacts are provided by aspartate 78 and aspartate 80. Cysteine 97 and cysteine 104 together coordinate Zn(2+).

The protein belongs to the PRA-CH family. As to quaternary structure, homodimer. It depends on Mg(2+) as a cofactor. Zn(2+) serves as cofactor.

It is found in the cytoplasm. It catalyses the reaction 1-(5-phospho-beta-D-ribosyl)-5'-AMP + H2O = 1-(5-phospho-beta-D-ribosyl)-5-[(5-phospho-beta-D-ribosylamino)methylideneamino]imidazole-4-carboxamide. The protein operates within amino-acid biosynthesis; L-histidine biosynthesis; L-histidine from 5-phospho-alpha-D-ribose 1-diphosphate: step 3/9. Catalyzes the hydrolysis of the adenine ring of phosphoribosyl-AMP. In Polaromonas naphthalenivorans (strain CJ2), this protein is Phosphoribosyl-AMP cyclohydrolase.